Consider the following 500-residue polypeptide: Protein PIGMENT DEFECTIVE 338, chloroplastic (500 aa).

Residues 1–63 (MQTLLCQPCK…FAFRGFSICR (63 aa)) constitute a chloroplast transit peptide. S1 motif domains follow at residues 156–265 (KPGD…LSSR), 283–351 (NEPI…LSEK), and 362–431 (GTLL…LSIA).

It belongs to the bacterial ribosomal protein bS1 family. As to quaternary structure, interacts with CRP1 and PRFB3. Present in leaves (at protein level). Confined to leaf chlorenchyma cells.

Its subcellular location is the plastid. It localises to the chloroplast. RNA-binding protein that acts as an RNA chaperone to remodel RNA structure and activates their translation. Required for seed pigmentation. Necessary for chloroplast development and subsequent photosynthetic electron flow, as well as for non-photochemical quenching (NPQ). Rubisco regulatory factor which regulates the concerted biogenesis of NDH, PSI (including PsaA, PsaB, PsaD, PsaF, PsaL, PsaG, PsaK and NdhH) and Cytb(6)f (including PetA, PetB, PetC and PetD) complexes. Binds specifically to and involved in the post-transcriptional regulation of plastid-encoded mRNAs (e.g. rbcL, petA, petB, petD and Ycf1), thus modulating expression, cellular localization/compartmentalization, and photosynthetic function. The chain is Protein PIGMENT DEFECTIVE 338, chloroplastic from Arabidopsis thaliana (Mouse-ear cress).